An 805-amino-acid polypeptide reads, in one-letter code: H(+)/Cl(-) exchange transporter 7 (805 aa).

Residues 1–49 (MANVSKKVSWSGRDRDDEEAAPLLRRTARPGGGTPLLNGAGPGAARQSP) form a disordered region. The Cytoplasmic segment spans residues 1–126 (MANVSKKVSW…TAFRTVEIKR (126 aa)). Phosphoserine occurs at positions 9 and 60. Helical transmembrane passes span 127 to 159 (WVIC…YRVI) and 174 to 197 (FSLL…VAFI). The Selectivity filter part_1 motif lies at 203–207 (GSGIP). Serine 204 contacts chloride. The helical intramembrane region spans 206-213 (IPQIKCFL). 2 consecutive transmembrane segments (helical) span residues 223–241 (RLKT…VVGG) and 247–264 (EGPM…ISQG). The Selectivity filter part_2 signature appears at 245–249 (GKEGP). 2 intramembrane regions (helical) span residues 288–300 (FVSA…VSAA) and 304–312 (PVGGVLFSL). The next 5 membrane-spanning stretches (helical) occupy residues 322 to 341 (FLTW…LNFV), 375 to 405 (IPVF…FRIR), 410 to 432 (PCLQ…FVLI), 487 to 507 (PLTL…TYGL), and 512 to 535 (GVFI…LSYL). The Selectivity filter part_3 motif lies at 512 to 516 (GVFIP). Position 514 (phenylalanine 514) interacts with chloride. The helical intramembrane region spans 545 to 559 (GKYALMGAAAQLGGI). Positions 560-562 (VRM) form an intramembrane region, note=Loop between two helices. The segment at residues 563–574 (TLSLTVIMMEAT) is an intramembrane region (helical). The segment at residues 575 to 578 (SNVT) is an intramembrane region (note=Loop between two helices). A helical membrane pass occupies residues 579 to 597 (YGFPIMLVLMTAKIVGDVF). Residues 598-805 (IEGLYDMHIQ…GLEELSLAQT (208 aa)) lie on the Cytoplasmic side of the membrane. Tyrosine 602 is a chloride binding site. 2 consecutive CBS domains span residues 631–695 (MSTP…VFVE) and 741–799 (MNPS…GLEE). ATP is bound by residues 658-660 (HNG) and 783-786 (TRKD). At serine 801 the chain carries Phosphoserine.

The protein belongs to the chloride channel (TC 2.A.49) family. ClC-7/CLCN7 subfamily. In terms of assembly, chloride channel 7 are heteromers of alpha (CLCN7) and beta (OSTM1) subunits. As to expression, brain and kidney.

Its subcellular location is the lysosome membrane. The catalysed reaction is 2 chloride(in) + H(+)(out) = 2 chloride(out) + H(+)(in). Slowly voltage-gated channel mediating the exchange of chloride ions against protons. Functions as antiporter and contributes to the acidification of the lysosome lumen and may be involved in maintaining lysosomal pH. The CLC channel family contains both chloride channels and proton-coupled anion transporters that exchange chloride or another anion for protons. The presence of conserved gating glutamate residues is typical for family members that function as antiporters. This is H(+)/Cl(-) exchange transporter 7 from Homo sapiens (Human).